Here is a 95-residue protein sequence, read N- to C-terminus: MSQIMYNYPAMLAHAAEMNTYSGALHAVGADIAAEQHALASAWQGDTGMTYQAWQAQWNQAMEELVRAYRAMATTHEQNTMAMSARDQAEGAKWG.

Belongs to the WXG100 family. ESAT-6 subfamily. In terms of assembly, forms a tight 1:1 complex with EsxG.

Its subcellular location is the secreted. The polypeptide is ESAT-6-like protein EsxH (Mycolicibacterium smegmatis (strain ATCC 700084 / mc(2)155) (Mycobacterium smegmatis)).